The primary structure comprises 572 residues: Proline--tRNA ligase (572 aa).

The protein belongs to the class-II aminoacyl-tRNA synthetase family. ProS type 1 subfamily. As to quaternary structure, homodimer.

The protein localises to the cytoplasm. The catalysed reaction is tRNA(Pro) + L-proline + ATP = L-prolyl-tRNA(Pro) + AMP + diphosphate. In terms of biological role, catalyzes the attachment of proline to tRNA(Pro) in a two-step reaction: proline is first activated by ATP to form Pro-AMP and then transferred to the acceptor end of tRNA(Pro). As ProRS can inadvertently accommodate and process non-cognate amino acids such as alanine and cysteine, to avoid such errors it has two additional distinct editing activities against alanine. One activity is designated as 'pretransfer' editing and involves the tRNA(Pro)-independent hydrolysis of activated Ala-AMP. The other activity is designated 'posttransfer' editing and involves deacylation of mischarged Ala-tRNA(Pro). The misacylated Cys-tRNA(Pro) is not edited by ProRS. The chain is Proline--tRNA ligase from Yersinia pseudotuberculosis serotype IB (strain PB1/+).